A 21-amino-acid chain; its full sequence is Protopolybiakinin-1 (21 aa).

The span at 1 to 11 shows a compositional bias: basic residues; sequence DKNKKPIRVGG. The segment at 1–21 is disordered; it reads DKNKKPIRVGGRRPPGFTPFR.

This sequence belongs to the bradykinin-related peptide family. As to expression, expressed by the venom gland.

It is found in the secreted. Functionally, causes constriction of the isolated rat ileum muscles (is 13-fold less potent than bradykinin (BK)), as well as degranulation of mast cells (is 7-fold more potent than BK). In vivo, causes algesic effects. Muscle constriction and algesic effects are partially mediated by bradykinin receptors B2 (BDKRB2). This is Protopolybiakinin-1 from Protopolybia exigua (Neotropical social wasp).